Reading from the N-terminus, the 93-residue chain is MKYPKKVKTFCRYCGKHTLHEVERVSKGKASSLNWINRQKKRRGKVGNLGKFSKVPGGDKPTKRVNIRFRCTECKKAHHRPTWRAKRFELIER.

The Zn(2+) site is built by C11, C14, C71, and C74. The C4-type zinc finger occupies 11–74; that stretch reads CRYCGKHTLH…VNIRFRCTEC (64 aa).

It belongs to the eukaryotic ribosomal protein eL42 family. As to quaternary structure, part of the 50S ribosomal subunit. The cofactor is Zn(2+).

Binds to the 23S rRNA. The sequence is that of Large ribosomal subunit protein eL42 from Archaeoglobus fulgidus (strain ATCC 49558 / DSM 4304 / JCM 9628 / NBRC 100126 / VC-16).